A 43-amino-acid polypeptide reads, in one-letter code: Protein PsbN (43 aa).

Residues 4-24 (AIVLSISMAAVVVAITGISIY) traverse the membrane as a helical segment.

The protein belongs to the PsbN family.

Its subcellular location is the cellular thylakoid membrane. Functionally, may play a role in photosystem I and II biogenesis. This chain is Protein PsbN, found in Nostoc punctiforme (strain ATCC 29133 / PCC 73102).